The following is a 366-amino-acid chain: Class I histocompatibility antigen, Gogo-C*0203 alpha chain (366 aa).

An N-terminal signal peptide occupies residues 1-24; the sequence is MRVMAPRTLILLLSGALALTETWA. The alpha-1 stretch occupies residues 25–114; sequence GSHSMRYFYT…LRGYYNQSED (90 aa). The Extracellular segment spans residues 25–308; that stretch reads GSHSMRYFYT…EPSSQPTIPI (284 aa). Asn110 carries an N-linked (GlcNAc...) asparagine glycan. The segment at 115–206 is alpha-2; sequence GSHTLQSMYG…ENGKETLQRA (92 aa). 2 disulfide bridges follow: Cys125–Cys188 and Cys227–Cys283. The tract at residues 207–298 is alpha-3; the sequence is EPPKTHVTHH…GLPEPLTLRW (92 aa). The Ig-like C1-type domain occupies 209-297; that stretch reads PKTHVTHHPL…EGLPEPLTLR (89 aa). Residues 299–308 form a connecting peptide region; sequence EPSSQPTIPI. Residues 309 to 332 form a helical membrane-spanning segment; sequence VGIVVGLAVLVVLAVLGAVVTAMM. The Cytoplasmic portion of the chain corresponds to 333-366; that stretch reads CRRKSSGGKGGSCSQAACSNSAQGSDESLITCKA.

It belongs to the MHC class I family. As to quaternary structure, heterodimer of an alpha chain and a beta chain (beta-2-microglobulin).

It localises to the membrane. Functionally, involved in the presentation of foreign antigens to the immune system. The polypeptide is Class I histocompatibility antigen, Gogo-C*0203 alpha chain (Gorilla gorilla gorilla (Western lowland gorilla)).